Consider the following 130-residue polypeptide: Small ribosomal subunit protein uS8 (130 aa).

Belongs to the universal ribosomal protein uS8 family. Part of the 30S ribosomal subunit. Contacts proteins S5 and S12.

Its function is as follows. One of the primary rRNA binding proteins, it binds directly to 16S rRNA central domain where it helps coordinate assembly of the platform of the 30S subunit. The chain is Small ribosomal subunit protein uS8 from Salmonella arizonae (strain ATCC BAA-731 / CDC346-86 / RSK2980).